The chain runs to 689 residues: Pentatricopeptide repeat-containing protein At1g71460, chloroplastic (689 aa).

The N-terminal 49 residues, 1-49 (MEVVSSLGIRDLPASLSVTTSLNHRPHRSDKDGAPAKSPIRPSRTRRPS), are a transit peptide targeting the chloroplast. The segment at 16 to 68 (LSVTTSLNHRPHRSDKDGAPAKSPIRPSRTRRPSTSPAKKPKPFRERDAFPSS) is disordered. Positions 38–52 (SPIRPSRTRRPSTSP) are enriched in low complexity. 18 PPR repeats span residues 75–109 (NPYIIHRDIQIFARQNNLEVALTILDYLEQRGIPV), 110–144 (NATTFSALLEACVRRKSLLHGKQVHVHIRINGLES), 145–175 (NEFLRTKLVHMYTACGSVKDAQKVFDESTSS), 176–212 (NVYSWNALLRGTVISGKKRYQDVLSTFTEMRELGVDL), 213–247 (NVYSLSNVFKSFAGASALRQGLKTHALAIKNGLFN), 248–282 (SVFLKTSLVDMYFKCGKVGLARRVFDEIVERDIVV), 283–309 (WGAMIAGLAHNKRQWEALGLFRTMISE), 315–350 (NSVILTTILPVLGDVKALKLGKEVHAHVLKSKNYVE), 351–381 (QPFVHSGLIDLYCKCGDMASGRRVFYGSKQR), 382–416 (NAISWTALMSGYAANGRFDQALRSIVWMQQEGFRP), 417–451 (DVVTIATVLPVCAELRAIKQGKEIHCYALKNLFLP), 452–482 (NVSLVTSLMVMYSKCGVPEYPIRLFDRLEQR), 483–517 (NVKAWTAMIDCYVENCDLRAGIEVFRLMLLSKHRP), 518–552 (DSVTMGRVLTVCSDLKALKLGKELHGHILKKEFES), 553–583 (IPFVSARIIKMYGKCGDLRSANFSFDAVAVK), 584–618 (GSLTWTAIIEAYGCNELFRDAINCFEQMVSRGFTP), 619–649 (NTFTFTAVLSICSQAGFVDEAYRFFNLMLRM), and 655–689 (SEEHYSLVIELLNRCGRVEEAQRLAVMSSSSSLQT).

This sequence belongs to the PPR family. PCMP-A subfamily.

It localises to the plastid. The protein localises to the chloroplast. The polypeptide is Pentatricopeptide repeat-containing protein At1g71460, chloroplastic (PCMP-A3) (Arabidopsis thaliana (Mouse-ear cress)).